A 103-amino-acid polypeptide reads, in one-letter code: Isocitrate dehydrogenase [NAD] subunit beta, mitochondrial (103 aa).

Belongs to the isocitrate and isopropylmalate dehydrogenases family. As to quaternary structure, heterooligomer of subunits alpha (IDH3A), beta (IDH3B), and gamma (IDH3G) in the apparent ratio of 2:1:1. The heterodimer containing one IDH3A and one IDH3B subunit and the heterodimer containing one IDH3A and one IDH3G subunit assemble into a heterotetramer (which contains two subunits of IDH3A, one of IDH3B and one of IDH3G) and further into the heterooctamer.

It localises to the mitochondrion. Its activity is regulated as follows. The heterotetramer and the heterodimer composed of IDH3A and IDH3G subunits can be allosterically activated by citrate (CIT) or/and ADP, and the two activators can act independently or synergistically. The heterodimer composed of IDH3A and IDH3B subunits cannot be allosterically regulated and the allosteric regulation of the heterotetramer is through the IDH3G subunit and not the IDH3B subunit. The IDH3G subunit contains the allosteric site which consists of a CIT-binding site and an ADP-binding site, and the binding of CIT and ADP causes conformational changes at the allosteric site which are transmitted to the active site in the catalytic subunit (IDH3A) through a cascade of conformational changes at the heterodimer interface, leading to stabilization of the isocitrate-binding at the active site and thus activation of the enzyme. ATP can activate the heterotetramer and the heterodimer composed of IDH3A and IDH3G subunits at low concentrations but inhibits their activities at high concentrations, whereas ATP exhibits only inhibitory effect on the heterodimer composed of IDH3A and IDH3B subunits. Plays a structural role to facilitate the assembly and ensure the full activity of the enzyme catalyzing the decarboxylation of isocitrate (ICT) into alpha-ketoglutarate. The heterodimer composed of the alpha (IDH3A) and beta (IDH3B) subunits and the heterodimer composed of the alpha (IDH3A) and gamma (IDH3G) subunits, have considerable basal activity but the full activity of the heterotetramer (containing two subunits of IDH3A, one of IDH3B and one of IDH3G) requires the assembly and cooperative function of both heterodimers. The protein is Isocitrate dehydrogenase [NAD] subunit beta, mitochondrial (IDH3B) of Sus scrofa (Pig).